The primary structure comprises 554 residues: Gamma-aminobutyric acid receptor subunit alpha-4 (554 aa).

The first 35 residues, 1–35 (MVSAKKVPAIALSAGVSFALLRFLCLAVCLNESPG), serve as a signal peptide directing secretion. Residues 36-259 (QNQKEEKLCT…FHLRRKMGYF (224 aa)) are Extracellular-facing. N47 carries an N-linked (GlcNAc...) asparagine glycan. R100 lines the 4-aminobutanoate pocket. N-linked (GlcNAc...) asparagine glycosylation is found at N144 and N157. T163 contributes to the 4-aminobutanoate binding site. C172 and C186 are joined by a disulfide. A helical membrane pass occupies residues 260–280 (MIQTYIPCIMTVILSQVSFWI). Residues 281–284 (NKES) are Cytoplasmic-facing. Residues 285–305 (VPARTVFGITTVLTMTTLSIS) form a helical membrane-spanning segment. Residues 306–318 (ARHSLPKVSYATA) are Extracellular-facing. Residues 319–341 (MDWFIAVCFAFVFSALIEFAAVN) traverse the membrane as a helical segment. The Cytoplasmic segment spans residues 342–517 (YFTNIQMEKA…PPPSGSGTSK (176 aa)). Disordered regions lie at residues 350-381 (KAKR…QNTN), 397-435 (ESDV…SPNP), 452-471 (PSAS…ASVG), and 495-515 (ATGK…GSGT). The segment covering 410–422 (SSKSSTVVQESSK) has biased composition (low complexity). Residues 502–511 (TPPPSAPPPS) are compositionally biased toward pro residues. The chain crosses the membrane as a helical span at residues 518–540 (IDKYARILFPVTFGAFNMVYWVV). Residues 541–554 (YLSKDTMEKSESLM) lie on the Extracellular side of the membrane.

It belongs to the ligand-gated ion channel (TC 1.A.9) family. Gamma-aminobutyric acid receptor (TC 1.A.9.5) subfamily. GABRA4 sub-subfamily. In terms of assembly, heteropentamer, formed by a combination of alpha (GABRA1-6), beta (GABRB1-3), gamma (GABRG1-3), delta (GABRD), epsilon (GABRE), rho (GABRR1-3), pi (GABRP) and theta (GABRQ) chains, each subunit exhibiting distinct physiological and pharmacological properties. As to expression, expressed in the brain.

The protein resides in the cell membrane. It is found in the postsynaptic cell membrane. It carries out the reaction chloride(in) = chloride(out). Its activity is regulated as follows. Potentiated by histamine. Functionally, alpha subunit of the heteropentameric ligand-gated chloride channel gated by gamma-aminobutyric acid (GABA), a major inhibitory neurotransmitter in the brain. GABA-gated chloride channels, also named GABA(A) receptors (GABAAR), consist of five subunits arranged around a central pore and contain GABA active binding site(s) located at the alpha and beta subunit interface(s). When activated by GABA, GABAARs selectively allow the flow of chloride anions across the cell membrane down their electrochemical gradient. GABAARs containing alpha-4 are predominantly extrasynaptic, contributing to tonic inhibition in dentate granule cells and thalamic relay neurons. Extrasynaptic alpha-4-containing GABAARs control levels of excitability and network activity. GABAAR containing alpha-4-beta-3-delta subunits can simultaneously bind GABA and histamine where histamine binds at the interface of two neighboring beta subunits, which may be involved in the regulation of sleep and wakefulness. This is Gamma-aminobutyric acid receptor subunit alpha-4 from Homo sapiens (Human).